The chain runs to 61 residues: Disintegrin atroxatin (61 aa).

Positions 1–61 (NPCCDAATCK…ADCPRKGIYG (61 aa)) constitute a Disintegrin domain. 5 disulfides stabilise this stretch: C3–C26, C9–C23, C17–C23, C22–C47, and C35–C54. The Cell attachment site motif lies at 39 to 41 (RGD).

The protein belongs to the venom metalloproteinase (M12B) family. P-II subfamily. P-IIa sub-subfamily. Monomer (disintegrin). In terms of tissue distribution, expressed by the venom gland.

The protein localises to the secreted. In terms of biological role, inhibits fibrinogen interaction with platelets. Acts by binding to alpha-IIb/beta-3 (ITGA2B/ITGB3) on the platelet surface and inhibits aggregation induced by ADP, thrombin, platelet-activating factor and collagen. The polypeptide is Disintegrin atroxatin (Crotalus atrox (Western diamondback rattlesnake)).